A 341-amino-acid chain; its full sequence is S-adenosylmethionine:tRNA ribosyltransferase-isomerase (341 aa).

The protein belongs to the QueA family. Monomer.

Its subcellular location is the cytoplasm. It carries out the reaction 7-aminomethyl-7-carbaguanosine(34) in tRNA + S-adenosyl-L-methionine = epoxyqueuosine(34) in tRNA + adenine + L-methionine + 2 H(+). It functions in the pathway tRNA modification; tRNA-queuosine biosynthesis. Its function is as follows. Transfers and isomerizes the ribose moiety from AdoMet to the 7-aminomethyl group of 7-deazaguanine (preQ1-tRNA) to give epoxyqueuosine (oQ-tRNA). In Clostridioides difficile (strain 630) (Peptoclostridium difficile), this protein is S-adenosylmethionine:tRNA ribosyltransferase-isomerase.